Consider the following 67-residue polypeptide: Beta-defensin 103A (67 aa).

An N-terminal signal peptide occupies residues 1 to 22 (MRIHYLLFTLLFLFLVPVPGHG). 3 disulfides stabilise this stretch: C33/C62, C40/C55, and C45/C63.

Belongs to the beta-defensin family.

Its subcellular location is the secreted. Functionally, exhibits antimicrobial activity against Gram-positive and Gram-negative bacteria. The protein is Beta-defensin 103A (DEFB103A) of Gorilla gorilla gorilla (Western lowland gorilla).